The sequence spans 1035 residues: DNA polymerase catalytic subunit (1035 aa).

This sequence belongs to the DNA polymerase type-B family.

It is found in the host nucleus. It catalyses the reaction DNA(n) + a 2'-deoxyribonucleoside 5'-triphosphate = DNA(n+1) + diphosphate. This is DNA polymerase catalytic subunit (UL54) from Macaca mulatta (Rhesus macaque).